Here is a 985-residue protein sequence, read N- to C-terminus: DNA ligase 4 (985 aa).

Disordered regions lie at residues 1–27 (MDRLNNVGGETERELDEKYPNRPRNKH) and 43–70 (LNGNKKRPTGPAAARKKLGPHGGQQTLS). Residues 10–20 (ETERELDEKYP) show a composition bias toward basic and acidic residues. Basic residues predominate over residues 46-61 (NKKRPTGPAAARKKLG). ATP-binding residues include Glu-310, Lys-312, Leu-313, Arg-317, Glu-379, Phe-420, Glu-480, Lys-485, Lys-502, and Lys-504. Residue Lys-312 is the N6-AMP-lysine intermediate of the active site. Glu-379 serves as a coordination point for Mg(2+). Glu-480 provides a ligand contact to Mg(2+). BRCT domains are found at residues 711–804 (PSGH…PDLL) and 878–983 (LRGW…RFAP).

This sequence belongs to the ATP-dependent DNA ligase family. Requires Mg(2+) as cofactor.

The protein resides in the nucleus. It carries out the reaction ATP + (deoxyribonucleotide)n-3'-hydroxyl + 5'-phospho-(deoxyribonucleotide)m = (deoxyribonucleotide)n+m + AMP + diphosphate.. DNA ligase involved in DNA non-homologous end joining (NHEJ); required for double-strand break (DSB) repair. This is DNA ligase 4 (LIG4) from Coccidioides immitis (strain RS) (Valley fever fungus).